The primary structure comprises 663 residues: UvrABC system protein B (663 aa).

One can recognise a Helicase ATP-binding domain in the interval 26–414; sequence DGLESGLAKQ…DNVAEQVVRP (389 aa). ATP is bound at residue 39–46; that stretch reads GVTGSGKT. The short motif at 92 to 115 is the Beta-hairpin element; the sequence is YYDYYQPEAYVPASDTFIEKDASI. Residues 430–596 enclose the Helicase C-terminal domain; that stretch reads QVDDLMSEIR…GINKSVEDIL (167 aa). Residues 624–659 form the UVR domain; that stretch reads AKQINALEKQMYAHAQNMEFELAAKIRDEYLLLKEQ.

This sequence belongs to the UvrB family. Forms a heterotetramer with UvrA during the search for lesions. Interacts with UvrC in an incision complex.

The protein localises to the cytoplasm. In terms of biological role, the UvrABC repair system catalyzes the recognition and processing of DNA lesions. A damage recognition complex composed of 2 UvrA and 2 UvrB subunits scans DNA for abnormalities. Upon binding of the UvrA(2)B(2) complex to a putative damaged site, the DNA wraps around one UvrB monomer. DNA wrap is dependent on ATP binding by UvrB and probably causes local melting of the DNA helix, facilitating insertion of UvrB beta-hairpin between the DNA strands. Then UvrB probes one DNA strand for the presence of a lesion. If a lesion is found the UvrA subunits dissociate and the UvrB-DNA preincision complex is formed. This complex is subsequently bound by UvrC and the second UvrB is released. If no lesion is found, the DNA wraps around the other UvrB subunit that will check the other stand for damage. The sequence is that of UvrABC system protein B from Legionella pneumophila (strain Lens).